The following is a 115-amino-acid chain: Migration and invasion enhancer 1 (115 aa).

Residues 1–10 (MSGDTGTTSV) show a composition bias toward polar residues. The tract at residues 1–22 (MSGDTGTTSVAPPPGETEPGHG) is disordered. Ser2 carries the post-translational modification N-acetylserine. Cys30 and Cys33 are oxidised to a cystine. Cys112 carries S-geranylgeranyl cysteine lipidation. A propeptide spans 113 to 115 (VIL) (removed in mature form).

Belongs to the SelWTH family. Interacts with GPX1. Isoprenylation facilitates association with the plasma membrane and enhances the migratory phenotype of cells by inducing increased filopodia formation.

It localises to the cytoplasm. Its subcellular location is the cytosol. It is found in the cell membrane. Increases cell migration by inducing filopodia formation at the leading edge of migrating cells. Plays a role in regulation of apoptosis, possibly through control of CASP3. May be involved in a redox-related process. The chain is Migration and invasion enhancer 1 (MIEN1) from Bos taurus (Bovine).